Reading from the N-terminus, the 308-residue chain is Ribosomal protein L11 methyltransferase (308 aa).

S-adenosyl-L-methionine-binding residues include T160, G181, D203, and N245.

This sequence belongs to the methyltransferase superfamily. PrmA family.

Its subcellular location is the cytoplasm. It carries out the reaction L-lysyl-[protein] + 3 S-adenosyl-L-methionine = N(6),N(6),N(6)-trimethyl-L-lysyl-[protein] + 3 S-adenosyl-L-homocysteine + 3 H(+). In terms of biological role, methylates ribosomal protein L11. The chain is Ribosomal protein L11 methyltransferase from Thermoanaerobacter sp. (strain X514).